Consider the following 125-residue polypeptide: Large ribosomal subunit protein uL22 (125 aa).

Belongs to the universal ribosomal protein uL22 family. In terms of assembly, part of the 50S ribosomal subunit.

In terms of biological role, this protein binds specifically to 23S rRNA; its binding is stimulated by other ribosomal proteins, e.g. L4, L17, and L20. It is important during the early stages of 50S assembly. It makes multiple contacts with different domains of the 23S rRNA in the assembled 50S subunit and ribosome. The globular domain of the protein is located near the polypeptide exit tunnel on the outside of the subunit, while an extended beta-hairpin is found that lines the wall of the exit tunnel in the center of the 70S ribosome. The chain is Large ribosomal subunit protein uL22 from Novosphingobium aromaticivorans (strain ATCC 700278 / DSM 12444 / CCUG 56034 / CIP 105152 / NBRC 16084 / F199).